A 537-amino-acid polypeptide reads, in one-letter code: Frizzled-4 (537 aa).

Residues 1-36 form the signal peptide; the sequence is MAWPGTGPSSRGAPGGVGLRLGLLLQFLLLLRPTLG. The Extracellular portion of the chain corresponds to 37-212; that stretch reads FGDEEERRCD…KCGYDAGLYS (176 aa). Positions 40-161 constitute an FZ domain; the sequence is EEERRCDPIR…NDHNHMCMEG (122 aa). 8 disulfides stabilise this stretch: Cys45/Cys106, Cys53/Cys99, Cys90/Cys128, Cys117/Cys158, Cys121/Cys145, Cys181/Cys200, Cys204/Cys282, and Cys302/Cys377. N-linked (GlcNAc...) asparagine glycosylation occurs at Asn59. Asn144 carries an N-linked (GlcNAc...) asparagine glycan. Residues 213–243 traverse the membrane as a helical segment; it reads RSAKEFTDIWMAVWASLCFISTTFTVLTFLI. Residues 244-249 lie on the Cytoplasmic side of the membrane; it reads DSSRFS. The helical transmembrane segment at 250-275 threads the bilayer; that stretch reads YPERPIIFLSMCYNIYSIAYIVRLTV. At 276–299 the chain is on the extracellular side; it reads GRERISCDFEEAAEPVLIQEGLKN. A helical transmembrane segment spans residues 300–333; sequence TGCAIIFLLMYFFGMASSIWWVILTLTWFLAAGL. Residues 334–336 lie on the Cytoplasmic side of the membrane; that stretch reads KWG. The chain crosses the membrane as a helical span at residues 337-365; the sequence is HEAIEMHSSYFHIAAWAIPAVKTIVILIM. Topologically, residues 366-383 are extracellular; sequence RLVDADELTGLCYVGNQN. Residues 384-410 traverse the membrane as a helical segment; it reads LDALTGFVVAPLFTYLVIGTLFIAAGL. Over 411–431 the chain is Cytoplasmic; the sequence is VALFKIRSNLQKDGTKTDKLE. Residues 432-460 form a helical membrane-spanning segment; that stretch reads RLMVKIGVFSVLYTVPATCVIACYFYEIS. The Extracellular segment spans residues 461–473; sequence NWALFRYSADDSN. Residues 474–495 form a helical membrane-spanning segment; that stretch reads MAVEMLKIFMSLLVGITSGMWI. At 496 to 537 the chain is on the cytoplasmic side; the sequence is WSAKTLHTWQKCSNRLVNSGKVKREKRGNGWVKPGKGNETVV. Residues 499–504 carry the Lys-Thr-X-X-X-Trp motif, mediates interaction with the PDZ domain of Dvl family members motif; the sequence is KTLHTW. Positions 535–537 match the PDZ-binding motif; that stretch reads TVV.

This sequence belongs to the G-protein coupled receptor Fz/Smo family. As to quaternary structure, interacts with MAGI3 and NDP. Component of a complex, at least composed of TSPAN12, FZD4 and norrin (NDP). Interacts (via FZ domain) with TSKU; TSKU competes with WNT2B for binding to FZD4, inhibiting Wnt signaling and repressing peripheral eye development. Interacts with glypican GPC3. Post-translationally, ubiquitinated by ZNRF3, leading to its degradation by the proteasome. As to expression, expressed in chondrocytes.

Its subcellular location is the cell membrane. Receptor for Wnt proteins. Most frizzled receptors are coupled to the beta-catenin (CTNNB1) canonical signaling pathway, which leads to the activation of disheveled proteins, inhibition of GSK-3 kinase, nuclear accumulation of beta-catenin (CTNNB1) and activation of Wnt target genes. Plays a critical role in retinal vascularization by acting as a receptor for Wnt proteins and norrin (NDP). In retina, it can be activated by Wnt protein-binding and also by Wnt-independent signaling via binding of norrin (NDP), promoting in both cases beta-catenin (CTNNB1) accumulation and stimulation of LEF/TCF-mediated transcriptional programs. A second signaling pathway involving PKC and calcium fluxes has been seen for some family members, but it is not yet clear if it represents a distinct pathway or if it can be integrated in the canonical pathway, as PKC seems to be required for Wnt-mediated inactivation of GSK-3 kinase. Both pathways seem to involve interactions with G-proteins. May be involved in transduction and intercellular transmission of polarity information during tissue morphogenesis and/or in differentiated tissues. Activation by Wnt5A stimulates PKC activity via a G-protein-dependent mechanism. The protein is Frizzled-4 (Fzd4) of Mus musculus (Mouse).